The following is an 858-amino-acid chain: Large structural phosphoprotein (858 aa).

The segment at 603-629 is disordered; the sequence is DVSRGGKGNSRDLYSGGNAEKKETSGK.

Belongs to the herpesviridae large structural phosphoprotein family. In terms of assembly, homotetramer. Interacts with the major capsid protein. 180 tegument protein pU11 tetramers bind to the virion capsid. Post-translationally, phosphorylated at multiple sites.

The protein resides in the virion tegument. The protein is Large structural phosphoprotein (U11) of Homo sapiens (Human).